The chain runs to 931 residues: Protocadherin gamma-A1 (931 aa).

An N-terminal signal peptide occupies residues 1–28 (MKIQKKLTGCSRLMLLCLSLELLLEAGA). Cadherin domains lie at 29–133 (GNIH…TPQF), 134–242 (QLEE…PPAF), 243–347 (TQAQ…APEV), 348–452 (TITS…SPVF), 453–562 (HQDS…APEI), and 570–682 (DGST…EPSA). Residues 29–692 (GNIHYSVPEE…KPNDSDLTLY (664 aa)) lie on the Extracellular side of the membrane. Residues Asn-265, Asn-419, and Asn-545 are each glycosylated (N-linked (GlcNAc...) asparagine). A glycan (N-linked (GlcNAc...) asparagine) is linked at Asn-685. A helical transmembrane segment spans residues 693-713 (LVVAAAAVSCVFLAFVIVLLA). Residues 714 to 931 (HRLRRWHKSR…KKKSGKKEKK (218 aa)) lie on the Cytoplasmic side of the membrane. Disordered regions lie at residues 801-840 (KKEPFSQQAPPNTDWRFSQAQRPGTSGSQNGDDTGTWPNN) and 901-931 (ATLTNAAGKRDGKAPAGGNGNKKKSGKKEKK). Over residues 805-840 (FSQQAPPNTDWRFSQAQRPGTSGSQNGDDTGTWPNN) the composition is skewed to polar residues. Positions 921-931 (NKKKSGKKEKK) are enriched in basic residues.

Its subcellular location is the cell membrane. In terms of biological role, potential calcium-dependent cell-adhesion protein. May be involved in the establishment and maintenance of specific neuronal connections in the brain. This is Protocadherin gamma-A1 (PCDHGA1) from Homo sapiens (Human).